Reading from the N-terminus, the 303-residue chain is tRNA pseudouridine synthase B (303 aa).

D47 functions as the Nucleophile in the catalytic mechanism.

It belongs to the pseudouridine synthase TruB family. Type 1 subfamily.

It catalyses the reaction uridine(55) in tRNA = pseudouridine(55) in tRNA. Responsible for synthesis of pseudouridine from uracil-55 in the psi GC loop of transfer RNAs. This Legionella pneumophila (strain Paris) protein is tRNA pseudouridine synthase B.